The following is a 280-amino-acid chain: Beta carbonic anhydrase 4 (280 aa).

N-acetylalanine is present on alanine 2. The stretch at 47–76 forms a coiled coil; the sequence is NVAAAKIKALTAELKELDSSNSDAIERIKT. Threonine 57 carries the phosphothreonine modification. At serine 117 the chain carries Phosphoserine. Cysteine 223 carries the post-translational modification S-nitrosocysteine.

This sequence belongs to the beta-class carbonic anhydrase family. As to quaternary structure, interacts with DTX56. In terms of tissue distribution, strongly expressed in aerial tissues including leaves, stems, flowers and siliques. Accumulates in both guard cells and mesophyll cells.

The protein localises to the cell membrane. It catalyses the reaction hydrogencarbonate + H(+) = CO2 + H2O. In terms of biological role, reversible hydration of carbon dioxide. Together with BCA1, involved in the CO(2) signaling pathway which controls gas-exchange between plants and the atmosphere by modulating stomatal development and movements. Promotes water use efficiency. In Arabidopsis thaliana (Mouse-ear cress), this protein is Beta carbonic anhydrase 4.